A 322-amino-acid polypeptide reads, in one-letter code: Phosphatidylglycerol--prolipoprotein diacylglyceryl transferase (322 aa).

3 consecutive transmembrane segments (helical) span residues 23–43, 53–73, and 97–117; these read VYPI…AFFW, FFAL…LWFV, and GLSI…YIYF. Residue Arg143 participates in a 1,2-diacyl-sn-glycero-3-phospho-(1'-sn-glycerol) binding. The next 2 helical transmembrane spans lie at 191–211 and 250–270; these read PLFL…VWII and LAAM…EIWA.

This sequence belongs to the Lgt family.

The protein resides in the cell membrane. The catalysed reaction is L-cysteinyl-[prolipoprotein] + a 1,2-diacyl-sn-glycero-3-phospho-(1'-sn-glycerol) = an S-1,2-diacyl-sn-glyceryl-L-cysteinyl-[prolipoprotein] + sn-glycerol 1-phosphate + H(+). It functions in the pathway protein modification; lipoprotein biosynthesis (diacylglyceryl transfer). Catalyzes the transfer of the diacylglyceryl group from phosphatidylglycerol to the sulfhydryl group of the N-terminal cysteine of a prolipoprotein, the first step in the formation of mature lipoproteins. This is Phosphatidylglycerol--prolipoprotein diacylglyceryl transferase from Mycoplasmopsis pulmonis (strain UAB CTIP) (Mycoplasma pulmonis).